The following is a 341-amino-acid chain: Holliday junction branch migration complex subunit RuvB (341 aa).

The interval 1-21 is disordered; that stretch reads MSQPDPMLRPEPLESDGEDRA. The segment at 4-183 is large ATPase domain (RuvB-L); the sequence is PDPMLRPEPL…FGIPTRLQFY (180 aa). ATP-binding positions include Leu-22, Arg-23, Gly-64, Lys-67, Thr-68, Thr-69, 130–132, Arg-173, Tyr-183, and Arg-220; that span reads EDF. Thr-68 serves as a coordination point for Mg(2+). The tract at residues 184–254 is small ATPAse domain (RuvB-S); that stretch reads TIEELDLIVT…IADSALTRLG (71 aa). Residues 257-341 form a head domain (RuvB-H) region; the sequence is HLGLDTADRR…PRTQESLFDE (85 aa). The DNA site is built by Arg-293, Arg-312, and Arg-317.

It belongs to the RuvB family. Homohexamer. Forms an RuvA(8)-RuvB(12)-Holliday junction (HJ) complex. HJ DNA is sandwiched between 2 RuvA tetramers; dsDNA enters through RuvA and exits via RuvB. An RuvB hexamer assembles on each DNA strand where it exits the tetramer. Each RuvB hexamer is contacted by two RuvA subunits (via domain III) on 2 adjacent RuvB subunits; this complex drives branch migration. In the full resolvosome a probable DNA-RuvA(4)-RuvB(12)-RuvC(2) complex forms which resolves the HJ.

It localises to the cytoplasm. The enzyme catalyses ATP + H2O = ADP + phosphate + H(+). The RuvA-RuvB-RuvC complex processes Holliday junction (HJ) DNA during genetic recombination and DNA repair, while the RuvA-RuvB complex plays an important role in the rescue of blocked DNA replication forks via replication fork reversal (RFR). RuvA specifically binds to HJ cruciform DNA, conferring on it an open structure. The RuvB hexamer acts as an ATP-dependent pump, pulling dsDNA into and through the RuvAB complex. RuvB forms 2 homohexamers on either side of HJ DNA bound by 1 or 2 RuvA tetramers; 4 subunits per hexamer contact DNA at a time. Coordinated motions by a converter formed by DNA-disengaged RuvB subunits stimulates ATP hydrolysis and nucleotide exchange. Immobilization of the converter enables RuvB to convert the ATP-contained energy into a lever motion, pulling 2 nucleotides of DNA out of the RuvA tetramer per ATP hydrolyzed, thus driving DNA branch migration. The RuvB motors rotate together with the DNA substrate, which together with the progressing nucleotide cycle form the mechanistic basis for DNA recombination by continuous HJ branch migration. Branch migration allows RuvC to scan DNA until it finds its consensus sequence, where it cleaves and resolves cruciform DNA. The chain is Holliday junction branch migration complex subunit RuvB from Paracoccus denitrificans (strain Pd 1222).